Here is a 369-residue protein sequence, read N- to C-terminus: Glycolate oxidase (369 aa).

At Met-1 the chain carries N-acetylmethionine. Residues Met-1–Asp-359 form the FMN hydroxy acid dehydrogenase domain. Tyr-24 contributes to the glyoxylate binding site. FMN is bound by residues Pro-77–Ala-79, Ser-106, Gln-127–Tyr-129, and Thr-155. Glyoxylate is bound at residue Tyr-129. Position 164 (Arg-164) interacts with glyoxylate. Residues Lys-230 and Ser-252 each coordinate FMN. His-254 and Arg-257 together coordinate glyoxylate. Residue His-254 is the Proton acceptor of the active site. FMN-binding positions include Asp-285 to Arg-289 and Gly-308 to Arg-309. Positions Ala-367–Leu-369 match the Microbody targeting signal motif.

It belongs to the FMN-dependent alpha-hydroxy acid dehydrogenase family. In terms of assembly, homotetramer. FMN is required as a cofactor.

It localises to the peroxisome. It carries out the reaction glycolate + O2 = glyoxylate + H2O2. The enzyme catalyses a (2S)-2-hydroxycarboxylate + O2 = a 2-oxocarboxylate + H2O2. Its pathway is photosynthesis; photorespiration; glycine from 2-phosphoglycolate: step 2/3. Functionally, catalyzes the oxidation of glycolate to glyoxylate, with a reduction of O2 to H2O2. Is a key enzyme in photorespiration in green plants. To a lesser extent, is also able to use L-lactate and 2-hydroxbyutanoate as substrate in vitro, but shows almost no activity with L-mandelate. This is Glycolate oxidase from Spinacia oleracea (Spinach).